The primary structure comprises 244 residues: Ureidoacrylate amidohydrolase RutB (244 aa).

The active-site Proton acceptor is the aspartate 38. Residue lysine 147 is part of the active site. Cysteine 180 serves as the catalytic Nucleophile.

This sequence belongs to the isochorismatase family. RutB subfamily.

It carries out the reaction (Z)-3-ureidoacrylate + H2O + H(+) = (Z)-3-aminoacrylate + NH4(+) + CO2. The catalysed reaction is (Z)-3-ureidoacrylate + H2O = (Z)-3-aminoacrylate + carbamate + H(+). It catalyses the reaction (Z)-2-methylureidoacrylate + H2O + H(+) = (Z)-2-methylaminoacrylate + NH4(+) + CO2. Hydrolyzes ureidoacrylate to form aminoacrylate and carbamate. The carbamate hydrolyzes spontaneously, thereby releasing one of the nitrogen atoms of the pyrimidine ring as ammonia and one of its carbon atoms as CO2. The sequence is that of Ureidoacrylate amidohydrolase RutB from Shigella flexneri serotype X (strain 2002017).